We begin with the raw amino-acid sequence, 125 residues long: UPF0251 protein Dhaf_1981 (125 aa).

Belongs to the UPF0251 family.

The sequence is that of UPF0251 protein Dhaf_1981 from Desulfitobacterium hafniense (strain DSM 10664 / DCB-2).